Consider the following 526-residue polypeptide: MSGNKVEVDKRRTFAIISHPDAGKTTITEKVLLFGNALQKAGTVKGKKSGQHAKSDWMEMEKDRGISITTSVMQFPYNDALVNLLDTPGHEDFSEDTYRTLTAVDSCLMVIDSAKGVEQRTIKLMEVTRLRDTPIVTFMNKLDRDIRDPLELMDEVEEVLNIACAPITWPISSGKEFKGVYHLLRDEVILYQSGQGHTIQDSRIIKGLNNPELDEAIGAYAAEVREELELVLGASNEFDLEMFLAGELTPVFFGTALGNFGVDHILDGIVEWAPKPQARETEVRDIQPEDEKFSGFVFKIQANMDPKHRDRVAFMRICSGRYEQGMKMHHVRLGKDVNVSDALTFMAGDRNRAEVAYPGDIIGLHNHGTMRIGDTFTQGEKFRFTGIPNFAPEMFRRIRLKDPLKQKQLLKGLVQLSEEGAVQVFRPIDSNDLIVGAVGVLQFEVVVGRLKSEYKVEAIYEGISVATARWVYCDDERKLEEFRRKCSNNLALDGGDNLTYIAPTMVNLNLSMERYPDIQFAKTREN.

One can recognise a tr-type G domain in the interval 9-277 (DKRRTFAIIS…GIVEWAPKPQ (269 aa)). Residues 18-25 (SHPDAGKT), 86-90 (DTPGH), and 140-143 (NKLD) each bind GTP.

It belongs to the TRAFAC class translation factor GTPase superfamily. Classic translation factor GTPase family. PrfC subfamily.

The protein resides in the cytoplasm. Its function is as follows. Increases the formation of ribosomal termination complexes and stimulates activities of RF-1 and RF-2. It binds guanine nucleotides and has strong preference for UGA stop codons. It may interact directly with the ribosome. The stimulation of RF-1 and RF-2 is significantly reduced by GTP and GDP, but not by GMP. This chain is Peptide chain release factor 3, found in Shewanella woodyi (strain ATCC 51908 / MS32).